A 167-amino-acid chain; its full sequence is S-ribosylhomocysteine lyase (167 aa).

His54, His58, and Cys128 together coordinate Fe cation.

Belongs to the LuxS family. Homodimer. Requires Fe cation as cofactor.

The enzyme catalyses S-(5-deoxy-D-ribos-5-yl)-L-homocysteine = (S)-4,5-dihydroxypentane-2,3-dione + L-homocysteine. Involved in the synthesis of autoinducer 2 (AI-2) which is secreted by bacteria and is used to communicate both the cell density and the metabolic potential of the environment. The regulation of gene expression in response to changes in cell density is called quorum sensing. Catalyzes the transformation of S-ribosylhomocysteine (RHC) to homocysteine (HC) and 4,5-dihydroxy-2,3-pentadione (DPD). This Haemophilus influenzae (strain PittEE) protein is S-ribosylhomocysteine lyase.